Here is a 72-residue protein sequence, read N- to C-terminus: MKLSEVRKQLEEARKLSPVELEKLVREKKRELMELRFQASIGQLSQNHKIRDLKRQIARLLTVLNEKRRQNA.

Belongs to the universal ribosomal protein uL29 family.

The sequence is that of Large ribosomal subunit protein uL29 from Thermus thermophilus (strain ATCC BAA-163 / DSM 7039 / HB27).